The chain runs to 118 residues: Small ribosomal subunit protein uS13 (118 aa).

The tract at residues 94–118 (SLPLRGQRTKTNARTRKGPRKAIKK) is disordered.

This sequence belongs to the universal ribosomal protein uS13 family. As to quaternary structure, part of the 30S ribosomal subunit. Forms a loose heterodimer with protein S19. Forms two bridges to the 50S subunit in the 70S ribosome.

Functionally, located at the top of the head of the 30S subunit, it contacts several helices of the 16S rRNA. In the 70S ribosome it contacts the 23S rRNA (bridge B1a) and protein L5 of the 50S subunit (bridge B1b), connecting the 2 subunits; these bridges are implicated in subunit movement. Contacts the tRNAs in the A and P-sites. This is Small ribosomal subunit protein uS13 from Pseudoalteromonas atlantica (strain T6c / ATCC BAA-1087).